Consider the following 309-residue polypeptide: Porphobilinogen deaminase (309 aa).

Cysteine 241 carries the S-(dipyrrolylmethanemethyl)cysteine modification.

The protein belongs to the HMBS family. Monomer. It depends on dipyrromethane as a cofactor.

It carries out the reaction 4 porphobilinogen + H2O = hydroxymethylbilane + 4 NH4(+). The protein operates within porphyrin-containing compound metabolism; protoporphyrin-IX biosynthesis; coproporphyrinogen-III from 5-aminolevulinate: step 2/4. Functionally, tetrapolymerization of the monopyrrole PBG into the hydroxymethylbilane pre-uroporphyrinogen in several discrete steps. This is Porphobilinogen deaminase from Bacillus anthracis (strain A0248).